The sequence spans 341 residues: L-threonine 3-dehydrogenase (341 aa).

A Zn(2+)-binding site is contributed by Cys38. Active-site charge relay system residues include Thr40 and His43. Positions 63, 64, 93, 96, 99, and 107 each coordinate Zn(2+). Residues Ile175, Asp195, Arg200, Leu262–Ile264, and Ile286–Tyr287 contribute to the NAD(+) site.

The protein belongs to the zinc-containing alcohol dehydrogenase family. In terms of assembly, homotetramer. Requires Zn(2+) as cofactor.

The protein localises to the cytoplasm. It catalyses the reaction L-threonine + NAD(+) = (2S)-2-amino-3-oxobutanoate + NADH + H(+). It participates in amino-acid degradation; L-threonine degradation via oxydo-reductase pathway; glycine from L-threonine: step 1/2. Functionally, catalyzes the NAD(+)-dependent oxidation of L-threonine to 2-amino-3-ketobutyrate. The chain is L-threonine 3-dehydrogenase from Colwellia psychrerythraea (strain 34H / ATCC BAA-681) (Vibrio psychroerythus).